Consider the following 70-residue polypeptide: DNA-directed RNA polymerase subunit omega (70 aa).

This sequence belongs to the RNA polymerase subunit omega family. As to quaternary structure, the RNAP catalytic core consists of 2 alpha, 1 beta, 1 beta' and 1 omega subunit. When a sigma factor is associated with the core the holoenzyme is formed, which can initiate transcription.

It catalyses the reaction RNA(n) + a ribonucleoside 5'-triphosphate = RNA(n+1) + diphosphate. In terms of biological role, promotes RNA polymerase assembly. Latches the N- and C-terminal regions of the beta' subunit thereby facilitating its interaction with the beta and alpha subunits. The protein is DNA-directed RNA polymerase subunit omega of Nitratiruptor sp. (strain SB155-2).